The primary structure comprises 1056 residues: Carbamoyl phosphate synthase large chain (1056 aa).

Positions 1 to 401 are carboxyphosphate synthetic domain; that stretch reads MPKRTDIHKI…ALHKAVRSLE (401 aa). The ATP site is built by arginine 129, arginine 169, glycine 175, glycine 176, lysine 208, isoleucine 210, glutamate 215, glycine 241, isoleucine 242, histidine 243, glutamine 284, and glutamate 298. Residues 133–327 enclose the ATP-grasp 1 domain; that stretch reads KELMNELGEP…IAKMAAKIAV (195 aa). Positions 284, 298, and 300 each coordinate Mg(2+). 3 residues coordinate Mn(2+): glutamine 284, glutamate 298, and asparagine 300. The tract at residues 402–546 is oligomerization domain; that stretch reads IDEKDLFSAE…YSAYDHENES (145 aa). The segment at 547 to 929 is carbamoyl phosphate synthetic domain; sequence QRTKKPSILV…ALHKAFSGAH (383 aa). Residues 671–861 form the ATP-grasp 2 domain; it reads DQVITDLNLK…MAQVATRVIL (191 aa). The ATP site is built by arginine 707, alanine 746, leucine 748, glutamate 752, glycine 777, valine 778, histidine 779, serine 780, glutamine 820, and glutamate 832. The Mg(2+) site is built by glutamine 820, glutamate 832, and asparagine 834. The Mn(2+) site is built by glutamine 820, glutamate 832, and asparagine 834. The MGS-like domain occupies 930 to 1056; it reads IQVPNDGKIL…DQSLEAITIK (127 aa). An allosteric domain region spans residues 930 to 1056; sequence IQVPNDGKIL…DQSLEAITIK (127 aa).

It belongs to the CarB family. Composed of two chains; the small (or glutamine) chain promotes the hydrolysis of glutamine to ammonia, which is used by the large (or ammonia) chain to synthesize carbamoyl phosphate. Tetramer of heterodimers (alpha,beta)4. Mg(2+) serves as cofactor. Mn(2+) is required as a cofactor.

The enzyme catalyses hydrogencarbonate + L-glutamine + 2 ATP + H2O = carbamoyl phosphate + L-glutamate + 2 ADP + phosphate + 2 H(+). The catalysed reaction is hydrogencarbonate + NH4(+) + 2 ATP = carbamoyl phosphate + 2 ADP + phosphate + 2 H(+). The protein operates within amino-acid biosynthesis; L-arginine biosynthesis; carbamoyl phosphate from bicarbonate: step 1/1. It functions in the pathway pyrimidine metabolism; UMP biosynthesis via de novo pathway; (S)-dihydroorotate from bicarbonate: step 1/3. Large subunit of the glutamine-dependent carbamoyl phosphate synthetase (CPSase). CPSase catalyzes the formation of carbamoyl phosphate from the ammonia moiety of glutamine, carbonate, and phosphate donated by ATP, constituting the first step of 2 biosynthetic pathways, one leading to arginine and/or urea and the other to pyrimidine nucleotides. The large subunit (synthetase) binds the substrates ammonia (free or transferred from glutamine from the small subunit), hydrogencarbonate and ATP and carries out an ATP-coupled ligase reaction, activating hydrogencarbonate by forming carboxy phosphate which reacts with ammonia to form carbamoyl phosphate. This chain is Carbamoyl phosphate synthase large chain, found in Limosilactobacillus reuteri (strain DSM 20016) (Lactobacillus reuteri).